The primary structure comprises 37 residues: Large ribosomal subunit protein bL36 (37 aa).

It belongs to the bacterial ribosomal protein bL36 family.

In Leptospira interrogans serogroup Icterohaemorrhagiae serovar copenhageni (strain Fiocruz L1-130), this protein is Large ribosomal subunit protein bL36.